The sequence spans 236 residues: Enolase-phosphatase E1 (236 aa).

Belongs to the HAD-like hydrolase superfamily. MasA/MtnC family. As to quaternary structure, monomer. The cofactor is Mg(2+).

It carries out the reaction 5-methylsulfanyl-2,3-dioxopentyl phosphate + H2O = 1,2-dihydroxy-5-(methylsulfanyl)pent-1-en-3-one + phosphate. It participates in amino-acid biosynthesis; L-methionine biosynthesis via salvage pathway; L-methionine from S-methyl-5-thio-alpha-D-ribose 1-phosphate: step 3/6. It functions in the pathway amino-acid biosynthesis; L-methionine biosynthesis via salvage pathway; L-methionine from S-methyl-5-thio-alpha-D-ribose 1-phosphate: step 4/6. Functionally, bifunctional enzyme that catalyzes the enolization of 2,3-diketo-5-methylthiopentyl-1-phosphate (DK-MTP-1-P) into the intermediate 2-hydroxy-3-keto-5-methylthiopentenyl-1-phosphate (HK-MTPenyl-1-P), which is then dephosphorylated to form the acireductone 1,2-dihydroxy-3-keto-5-methylthiopentene (DHK-MTPene). The protein is Enolase-phosphatase E1 of Frankia alni (strain DSM 45986 / CECT 9034 / ACN14a).